Consider the following 492-residue polypeptide: Catalase (492 aa).

Catalysis depends on residues histidine 65 and asparagine 138. Position 348 (tyrosine 348) interacts with heme.

It belongs to the catalase family. Homotetramer. It depends on heme as a cofactor.

Its subcellular location is the cytoplasm. The protein resides in the cytosol. The protein localises to the peroxisome matrix. It catalyses the reaction 2 H2O2 = O2 + 2 H2O. In terms of biological role, catalyzes the degradation of hydrogen peroxide (H(2)O(2)) generated by peroxisomal oxidases to water and oxygen, thereby protecting cells from the toxic effects of hydrogen peroxide. The polypeptide is Catalase (Vigna radiata var. radiata (Mung bean)).